Reading from the N-terminus, the 333-residue chain is 4-hydroxyproline epimerase (333 aa).

Residue cysteine 90 is the Proton acceptor of the active site. Residues 91–92 (GH) and aspartate 249 contribute to the substrate site. Cysteine 253 acts as the Proton donor in catalysis. A substrate-binding site is contributed by 254–255 (GT).

The protein belongs to the proline racemase family. As to quaternary structure, homodimer.

The enzyme catalyses trans-4-hydroxy-L-proline = cis-4-hydroxy-D-proline. Inhibited by iodoacetate, iodoacetamide and by high amounts (10 mM) of pyrrole-2-carboxylic acid (PYC). Not inhibited by PYC at 1 mM. Its function is as follows. Allows intracellular utilization of 4-hydroxyproline, one of the major constituents of host collagen, by converting 4-hydroxy-L-proline to 4-hydroxy-D-proline, which can be further metabolized by intracellular 4-hydroxy-D-proline oxidases. Strong B-cell mitogen. Plays an important role in the regulation of intra- and extracellular amino acid pools, allowing the bacterium to profit from host precursors and enzymatic pathways. The chain is 4-hydroxyproline epimerase from Brucella melitensis biotype 1 (strain ATCC 23456 / CCUG 17765 / NCTC 10094 / 16M).